The sequence spans 567 residues: MKQSKVFIPTMRDVPSEAEAQSHRLLLKSGLIKQSTSGIYSYLPLATRVLNNITAIVRQEMERIDSVEILMPALQQAELWEESGRWGAYGTELMRLQDRHGRQFALGPTHEELVTSIVRNELKSYKQLPMTLFQIQSKFRDEKRPRFGLLRGREFIMKDAYSFHADEASLDQTYQDMYQAYSRIFERVGINARPVVADSGAIGGSHTHEFMALSAIGEDTIVYSKESDYAANIEKAEVVYEPNHKHTTVQSLEKIETPNVKTAQELADFLGRPVDEIVKTMIFKVDGEYIMVLVRGHHEINDIKLKSYFGTDNIELATQDEIVNLVGANPGSLGPVIDKEIKIYADNFVQDLNNLVVGANEDGYHLINVNVGRDFNVDEYGDFRFILEGEKLSDSSGVAHFAEGIEVGQVFKLGTKYSESMNATFLDNQGKAQPLIMGCYGIGISRTLSAIVEQNHDDNGIVWPKSVTPFDLHLISINPKKDDQRELADALYAEFNTKFDVLYDDRQERAGVKFNDADLIGLPLRIVVGKRASEGIVEVKERLTGDSEEVHIADLMTVITNKYDNLK.

This sequence belongs to the class-II aminoacyl-tRNA synthetase family. ProS type 1 subfamily. Homodimer.

It is found in the cytoplasm. The catalysed reaction is tRNA(Pro) + L-proline + ATP = L-prolyl-tRNA(Pro) + AMP + diphosphate. Its function is as follows. Catalyzes the attachment of proline to tRNA(Pro) in a two-step reaction: proline is first activated by ATP to form Pro-AMP and then transferred to the acceptor end of tRNA(Pro). As ProRS can inadvertently accommodate and process non-cognate amino acids such as alanine and cysteine, to avoid such errors it has two additional distinct editing activities against alanine. One activity is designated as 'pretransfer' editing and involves the tRNA(Pro)-independent hydrolysis of activated Ala-AMP. The other activity is designated 'posttransfer' editing and involves deacylation of mischarged Ala-tRNA(Pro). The misacylated Cys-tRNA(Pro) is not edited by ProRS. The chain is Proline--tRNA ligase from Staphylococcus aureus (strain bovine RF122 / ET3-1).